The sequence spans 79 residues: CDC42 small effector protein 1 (79 aa).

Residues C10 and C11 are each lipidated (S-palmitoyl cysteine). The 14-residue stretch at 30–43 (IGEPMNFVHLTHIG) folds into the CRIB domain. Residues 41 to 79 (HIGSGDMGASDGLPRAGGVQEQMRSKCGRDRQWSNSGVL) are disordered. Residues 63 to 72 (MRSKCGRDRQ) are compositionally biased toward basic and acidic residues.

Belongs to the CDC42SE/SPEC family.

It is found in the cytoplasm. The protein resides in the cytoskeleton. The protein localises to the cell membrane. Functionally, probably involved in the organization of the actin cytoskeleton by acting downstream of CDC42, inducing actin filament assembly. This Xenopus tropicalis (Western clawed frog) protein is CDC42 small effector protein 1 (cdc42se1).